A 1121-amino-acid polypeptide reads, in one-letter code: Transcription factor CSR2 (1121 aa).

Residues serine 23, serine 46, and serine 127 each carry the phosphoserine modification. Disordered regions lie at residues 273–342 (PLHT…RSLP), 513–532 (HTQLVASRPRSSSISSPQKL), 579–600 (LKRNNSNGRSDNNGASSSGLAM), and 837–860 (IPQDKNHNEVNDTNGNSNTSLQTS). Residues 276–310 (TQRTSPSNTARTGNAMDTSNSDRASPASNNNTTDA) are compositionally biased toward polar residues. Low complexity-rich tracts occupy residues 318–329 (NNNPMNNNNSPA), 519–529 (SRPRSSSISSP), and 582–597 (NNSNGRSDNNGASSSG). Serine 327 carries the phosphoserine modification. Over residues 837 to 846 (IPQDKNHNEV) the composition is skewed to basic and acidic residues. A Glycyl lysine isopeptide (Lys-Gly) (interchain with G-Cter in ubiquitin) cross-link involves residue lysine 841. Positions 847 to 860 (NDTNGNSNTSLQTS) are enriched in polar residues. Residue serine 987 is modified to Phosphoserine. Residues 999–1009 (KTTAVSDSSNG) are compositionally biased toward polar residues. Disordered regions lie at residues 999–1022 (KTTAVSDSSNGAPIRDQQEQQARP) and 1075–1121 (TPRY…EISS). Low complexity predominate over residues 1084 to 1093 (TNTDYNYNDN).

The protein belongs to the CSR2 family. Post-translationally, phosphorylated by CDC28.

Its subcellular location is the cytoplasm. The protein localises to the nucleus. Functionally, transcription factor involved in the regulation of fermentation and aerobic oxidation. Acts as a repressor of CYC1, which is involved in electron flow through the mitochondria under aerobic condition. Required for pseudohyphal formation upon nitrogen starvation. May be involved in viability at stationary phase and aging. The protein is Transcription factor CSR2 (CSR2) of Saccharomyces cerevisiae (strain ATCC 204508 / S288c) (Baker's yeast).